Here is a 478-residue protein sequence, read N- to C-terminus: Sulfate adenylyltransferase subunit 1 (478 aa).

A tr-type G domain is found at 28 to 244 (KTMLRFLTCG…LESVDVVNAR (217 aa)). Residues 37 to 44 (GSVDDGKS) are G1. Residue 37-44 (GSVDDGKS) participates in GTP binding. The G2 stretch occupies residues 95–99 (GITID). The segment at 116–119 (DTPG) is G3. GTP contacts are provided by residues 116-120 (DTPGH) and 171-174 (NKMD). Positions 171 to 174 (NKMD) are G4. The interval 209–211 (SAL) is G5.

It belongs to the TRAFAC class translation factor GTPase superfamily. Classic translation factor GTPase family. CysN/NodQ subfamily. In terms of assembly, heterodimer composed of CysD, the smaller subunit, and CysN.

The enzyme catalyses sulfate + ATP + H(+) = adenosine 5'-phosphosulfate + diphosphate. It functions in the pathway sulfur metabolism; hydrogen sulfide biosynthesis; sulfite from sulfate: step 1/3. Its function is as follows. With CysD forms the ATP sulfurylase (ATPS) that catalyzes the adenylation of sulfate producing adenosine 5'-phosphosulfate (APS) and diphosphate, the first enzymatic step in sulfur assimilation pathway. APS synthesis involves the formation of a high-energy phosphoric-sulfuric acid anhydride bond driven by GTP hydrolysis by CysN coupled to ATP hydrolysis by CysD. In Yersinia pseudotuberculosis serotype O:1b (strain IP 31758), this protein is Sulfate adenylyltransferase subunit 1.